Reading from the N-terminus, the 78-residue chain is Large ribosomal subunit protein bL28 (78 aa).

The protein belongs to the bacterial ribosomal protein bL28 family.

The chain is Large ribosomal subunit protein bL28 from Hamiltonella defensa subsp. Acyrthosiphon pisum (strain 5AT).